The primary structure comprises 503 residues: Lysine--tRNA ligase (503 aa).

Residues E412 and E419 each contribute to the Mg(2+) site.

Belongs to the class-II aminoacyl-tRNA synthetase family. Homodimer. The cofactor is Mg(2+).

Its subcellular location is the cytoplasm. The catalysed reaction is tRNA(Lys) + L-lysine + ATP = L-lysyl-tRNA(Lys) + AMP + diphosphate. The sequence is that of Lysine--tRNA ligase from Buchnera aphidicola subsp. Schizaphis graminum (strain Sg).